Reading from the N-terminus, the 422-residue chain is Serine--tRNA ligase (422 aa).

A disordered region spans residues 1-20; that stretch reads MHDLKSIRDNPDGFDAGLKR. 229-231 contributes to the L-serine binding site; it reads TAE. Residue 260 to 262 participates in ATP binding; sequence RSE. Glutamate 283 is an L-serine binding site. 347 to 350 serves as a coordination point for ATP; the sequence is EISS. Serine 383 is a binding site for L-serine.

It belongs to the class-II aminoacyl-tRNA synthetase family. Type-1 seryl-tRNA synthetase subfamily. In terms of assembly, homodimer. The tRNA molecule binds across the dimer.

The protein resides in the cytoplasm. It catalyses the reaction tRNA(Ser) + L-serine + ATP = L-seryl-tRNA(Ser) + AMP + diphosphate + H(+). The catalysed reaction is tRNA(Sec) + L-serine + ATP = L-seryl-tRNA(Sec) + AMP + diphosphate + H(+). The protein operates within aminoacyl-tRNA biosynthesis; selenocysteinyl-tRNA(Sec) biosynthesis; L-seryl-tRNA(Sec) from L-serine and tRNA(Sec): step 1/1. Catalyzes the attachment of serine to tRNA(Ser). Is also able to aminoacylate tRNA(Sec) with serine, to form the misacylated tRNA L-seryl-tRNA(Sec), which will be further converted into selenocysteinyl-tRNA(Sec). This is Serine--tRNA ligase from Paramagnetospirillum magneticum (strain ATCC 700264 / AMB-1) (Magnetospirillum magneticum).